Reading from the N-terminus, the 143-residue chain is uncharacterized protein (143 aa).

The 94-residue stretch at 50–143 (NKEDAVVVDL…GENLPLVRGK (94 aa)) folds into the Rhodanese domain. Lysine 91 carries the post-translational modification N6-acetyllysine.

This is an uncharacterized protein from Escherichia coli O6:H1 (strain CFT073 / ATCC 700928 / UPEC).